A 364-amino-acid polypeptide reads, in one-letter code: DNA replication and repair protein RecF (364 aa).

Gly-30–Thr-37 serves as a coordination point for ATP.

The protein belongs to the RecF family.

The protein localises to the cytoplasm. In terms of biological role, the RecF protein is involved in DNA metabolism; it is required for DNA replication and normal SOS inducibility. RecF binds preferentially to single-stranded, linear DNA. It also seems to bind ATP. The sequence is that of DNA replication and repair protein RecF from Geobacter sp. (strain M21).